The primary structure comprises 428 residues: MTWFIDRRLNGKNKSTVNRQRFLRRYKAQIKQSISEAINKRSVTDVDSGESVSIPTDDISEPMFHQGRGGLRHRVHPGNDHFIQNDRIERPQGGGGGGSGSGQGQASQDGEGQDEFVFQISKDEYLDLLFEDLALPNLKKNQHRQLNEYKTHRAGFTSNGVPANISVVRSLQNSLARRTAMTAGKRRELHALETELETISHSEPAQLLEEERLRREIAELRAKIERVPFIDTFDLRYKNYEKRPEPSSQAVMFCLMDVSGSMDQATKDMAKRFYILLYLFLSRTYKNVEVVYIRHHTQAKEVDEHEFFYSQETGGTIVSSALKLMDEVVKERYDPGQWNIYAAQASDGDNWADDSPLCHEILAKKLLPVVRYYSYIEITRRAHQTLWREYEHLQAKFDNFAMQHIRDQEDIYPVFRELFQKQSANQSA.

Residues glycine 78–arginine 90 are compositionally biased toward basic and acidic residues. The interval glycine 78–glutamate 111 is disordered. Over residues glutamine 92–glutamine 103 the composition is skewed to gly residues.

It belongs to the UPF0229 family.

This chain is UPF0229 protein YeaH, found in Salmonella paratyphi C (strain RKS4594).